The sequence spans 645 residues: UvrABC system protein C (645 aa).

Residues 1–20 (MTDLPPHSSHHPADQGEPLV) form a disordered region. One can recognise a GIY-YIG domain in the interval 40–118 (YSPGVYRMLS…IKRMKPRFNI (79 aa)). Residues 228–263 (TELQQRLVAEMEQASQELNYERAASIRDRIRGFASI) enclose the UVR domain.

Belongs to the UvrC family. In terms of assembly, interacts with UvrB in an incision complex.

It localises to the cytoplasm. In terms of biological role, the UvrABC repair system catalyzes the recognition and processing of DNA lesions. UvrC both incises the 5' and 3' sides of the lesion. The N-terminal half is responsible for the 3' incision and the C-terminal half is responsible for the 5' incision. This chain is UvrABC system protein C, found in Gluconobacter oxydans (strain 621H) (Gluconobacter suboxydans).